Here is a 521-residue protein sequence, read N- to C-terminus: Alkyl hydroperoxide reductase subunit F (521 aa).

At Lys53 the chain carries N6-acetyllysine. FAD is bound at residue 214–229; that stretch reads DVLIVGSGPAGAAAAI. An intrachain disulfide couples Cys345 to Cys348. At Lys354 the chain carries N6-acetyllysine. 357–371 contributes to the NAD(+) binding site; it reads RVAVIGGGNSGVEAA. 478–488 provides a ligand contact to FAD; that stretch reads TNVKGVFAAGD.

Belongs to the class-II pyridine nucleotide-disulfide oxidoreductase family. As to quaternary structure, homodimer. It depends on FAD as a cofactor.

Serves to protect the cell against DNA damage by alkyl hydroperoxides. It can use either NADH or NADPH as electron donor for direct reduction of redox dyes or of alkyl hydroperoxides when combined with the AhpC protein. The chain is Alkyl hydroperoxide reductase subunit F (ahpF) from Escherichia coli (strain K12).